The chain runs to 59 residues: Membrane-associated ATPase epsilon chain (59 aa).

This sequence to E.hirae NtpH. Sul-ATPase is composed of six (or maybe five) subunits: alpha, beta, delta, gamma, C (proteolipid), and possibly epsilon.

The enzyme catalyses ATP + H2O + 4 H(+)(in) = ADP + phosphate + 5 H(+)(out). This chain is Membrane-associated ATPase epsilon chain (atpE), found in Sulfurisphaera tokodaii (strain DSM 16993 / JCM 10545 / NBRC 100140 / 7) (Sulfolobus tokodaii).